The following is a 121-amino-acid chain: MNAYAVIETGGEQLRVEPGRFYDVRHFASLNPENLGPNSKILIYRVLMICDESTINIGHPWLKGAMIKGRILHSRLDNKITVYRMRSKKKTRRKLGHRQKLIRFVVDSICSDVKDLYKQKD.

This sequence belongs to the bacterial ribosomal protein bL21 family. In terms of assembly, part of the 50S ribosomal subunit.

It localises to the plastid. Its subcellular location is the chloroplast. Functionally, this protein binds to 23S rRNA. The polypeptide is Large ribosomal subunit protein bL21c (Huperzia lucidula (Shining clubmoss)).